A 258-amino-acid polypeptide reads, in one-letter code: Proteasome subunit alpha (258 aa).

The protein belongs to the peptidase T1A family. In terms of assembly, the 20S proteasome core is composed of 14 alpha and 14 beta subunits that assemble into four stacked heptameric rings, resulting in a barrel-shaped structure. The two inner rings, each composed of seven catalytic beta subunits, are sandwiched by two outer rings, each composed of seven alpha subunits. The catalytic chamber with the active sites is on the inside of the barrel. Has a gated structure, the ends of the cylinder being occluded by the N-termini of the alpha-subunits. Is capped by the proteasome-associated ATPase, ARC.

The protein resides in the cytoplasm. It functions in the pathway protein degradation; proteasomal Pup-dependent pathway. Its activity is regulated as follows. The formation of the proteasomal ATPase ARC-20S proteasome complex, likely via the docking of the C-termini of ARC into the intersubunit pockets in the alpha-rings, may trigger opening of the gate for substrate entry. Interconversion between the open-gate and close-gate conformations leads to a dynamic regulation of the 20S proteasome proteolysis activity. Functionally, component of the proteasome core, a large protease complex with broad specificity involved in protein degradation. This chain is Proteasome subunit alpha, found in Nocardia farcinica (strain IFM 10152).